Reading from the N-terminus, the 690-residue chain is Elongation factor G (690 aa).

The tr-type G domain maps to 8–283 (EDYRNFGIMA…AVVDYLPSPL (276 aa)). GTP contacts are provided by residues 17–24 (AHIDAGKT), 81–85 (DTPGH), and 135–138 (NKMD).

It belongs to the TRAFAC class translation factor GTPase superfamily. Classic translation factor GTPase family. EF-G/EF-2 subfamily.

The protein localises to the cytoplasm. Catalyzes the GTP-dependent ribosomal translocation step during translation elongation. During this step, the ribosome changes from the pre-translocational (PRE) to the post-translocational (POST) state as the newly formed A-site-bound peptidyl-tRNA and P-site-bound deacylated tRNA move to the P and E sites, respectively. Catalyzes the coordinated movement of the two tRNA molecules, the mRNA and conformational changes in the ribosome. The sequence is that of Elongation factor G from Rhodopseudomonas palustris (strain ATCC BAA-98 / CGA009).